The primary structure comprises 543 residues: Thermosome subunit beta (543 aa).

The disordered stretch occupies residues 522 to 543 (TKSSSSSSNPPKSGSSSESSED). Residues 523–543 (KSSSSSSNPPKSGSSSESSED) are compositionally biased toward low complexity.

Belongs to the TCP-1 chaperonin family. As to quaternary structure, forms a Heterooligomeric complex of two stacked eight-membered rings. In terms of processing, the N-terminus is blocked.

Molecular chaperone; binds unfolded polypeptides in vitro, and has a weak ATPase activity. The polypeptide is Thermosome subunit beta (thsB) (Thermoplasma acidophilum (strain ATCC 25905 / DSM 1728 / JCM 9062 / NBRC 15155 / AMRC-C165)).